The primary structure comprises 413 residues: CinA-like protein (413 aa).

This sequence belongs to the CinA family.

In Geotalea daltonii (strain DSM 22248 / JCM 15807 / FRC-32) (Geobacter daltonii), this protein is CinA-like protein.